Consider the following 752-residue polypeptide: Translation initiation factor IF-2 (752 aa).

The interval 26-167 (RQGMGVKSHM…QPTQRKDKPL (142 aa)) is disordered. Polar residues predominate over residues 34–47 (HMSSVTPDQAQQLR). The segment covering 72 to 81 (KQNNHQAQNH) has biased composition (low complexity). The segment covering 83 to 96 (QHHDHDKTQNERPQ) has biased composition (basic and acidic residues). Residues 101–129 (SRSNNGTKDNNQHQNNGGRFGGSLNNDQG) show a composition bias toward polar residues. The segment covering 131 to 150 (NGKRFNKKNKKNKKHNKNKR) has biased composition (basic residues). The span at 151–167 (LREVAHKQPTQRKDKPL) shows a compositional bias: basic and acidic residues. Positions 253-422 (TRPAVVTVMG…LLQAEMLELK (170 aa)) constitute a tr-type G domain. The interval 262 to 269 (GHVDHGKT) is G1. GTP is bound at residue 262 to 269 (GHVDHGKT). A G2 region spans residues 287 to 291 (GITQE). Residues 308 to 311 (DTPG) form a G3 region. Residues 308–312 (DTPGH) and 362–365 (NKID) each bind GTP. The G4 stretch occupies residues 362–365 (NKID). The interval 398-400 (SAK) is G5.

This sequence belongs to the TRAFAC class translation factor GTPase superfamily. Classic translation factor GTPase family. IF-2 subfamily.

It localises to the cytoplasm. Functionally, one of the essential components for the initiation of protein synthesis. Protects formylmethionyl-tRNA from spontaneous hydrolysis and promotes its binding to the 30S ribosomal subunits. Also involved in the hydrolysis of GTP during the formation of the 70S ribosomal complex. The sequence is that of Translation initiation factor IF-2 from Limosilactobacillus reuteri (strain DSM 20016) (Lactobacillus reuteri).